The sequence spans 20 residues: Major extrapallial fluid protein (20 aa).

The tract at residues 1-20 (NPVDDHHDDHHDAPIVEHHD) is disordered.

In terms of assembly, homodimer. In terms of processing, glycosylated.

Its function is as follows. Appears to be a building block of the soluble organic matrix of the shell. The protein binds calcium. In Mytilus edulis (Blue mussel), this protein is Major extrapallial fluid protein.